The primary structure comprises 307 residues: MKKGVMRPGHVQLRVLNLESALAHYRDLLGLIEMDRDEQGRVYLKAWTEVDKFSVVLREADQPGMDFMGFKVIDEDCLNRLTQDLLNYGCLIETIPAGELKGCGRRVRFQTPSGHFFELYADKEYTGKWGLEEINPEAWPRNLKGMRAVRFDHCLLYGDELQATYALFTEVLGFYLAEQVIDDDGTRVAQFLSLSTKAHDVAFIHCPEKGKFHHVSFFLETWEDVLRAADLISMTDTSIDIGPTRHGLTHGKTIYFFDPSGNRNEVFCGGDYNYQDHKPVTWLAKDLGKAIFYHDRVLNERFLTVLT.

VOC domains follow at residues 7 to 122 (RPGH…LYAD) and 150 to 269 (RFDH…VFCG). Fe cation-binding residues include His153, His214, and Glu265.

Belongs to the extradiol ring-cleavage dioxygenase family. As to quaternary structure, homotetramer. Fe(2+) is required as a cofactor.

It catalyses the reaction catechol + O2 = (2Z,4E)-2-hydroxy-6-oxohexa-2,4-dienoate + H(+). It participates in aromatic compound metabolism; benzoate degradation via hydroxylation. In Pseudomonas sp. (strain CF600), this protein is Metapyrocatechase (dmpB).